Reading from the N-terminus, the 366-residue chain is Probable dual-specificity RNA methyltransferase RlmN (366 aa).

Glutamate 107 (proton acceptor) is an active-site residue. The region spanning 113–342 is the Radical SAM core domain; it reads AEERMTACLS…MAQKFHVTVR (230 aa). Cysteines 120 and 353 form a disulfide. [4Fe-4S] cluster is bound by residues cysteine 127, cysteine 131, and cysteine 134. S-adenosyl-L-methionine-binding positions include 177-178, serine 210, 233-235, and asparagine 310; these read GE and SLH. Cysteine 353 (S-methylcysteine intermediate) is an active-site residue.

This sequence belongs to the radical SAM superfamily. RlmN family. [4Fe-4S] cluster serves as cofactor.

Its subcellular location is the cytoplasm. The catalysed reaction is adenosine(2503) in 23S rRNA + 2 reduced [2Fe-2S]-[ferredoxin] + 2 S-adenosyl-L-methionine = 2-methyladenosine(2503) in 23S rRNA + 5'-deoxyadenosine + L-methionine + 2 oxidized [2Fe-2S]-[ferredoxin] + S-adenosyl-L-homocysteine. The enzyme catalyses adenosine(37) in tRNA + 2 reduced [2Fe-2S]-[ferredoxin] + 2 S-adenosyl-L-methionine = 2-methyladenosine(37) in tRNA + 5'-deoxyadenosine + L-methionine + 2 oxidized [2Fe-2S]-[ferredoxin] + S-adenosyl-L-homocysteine. Its function is as follows. Specifically methylates position 2 of adenine 2503 in 23S rRNA and position 2 of adenine 37 in tRNAs. In Chlorobium chlorochromatii (strain CaD3), this protein is Probable dual-specificity RNA methyltransferase RlmN.